The following is a 215-amino-acid chain: Charged multivesicular body protein 5 (215 aa).

Positions 29–81 form a coiled coil; sequence QMDEKINGLNQELLAYDKQIKATRPGPAQNAIKQKAIRVLQQKKMYERQRDQM. Residues 186-215 form a disordered region; sequence TPSVPTTDPHQSSVDEYGLPIGQEASQQVV. Polar residues predominate over residues 188–199; the sequence is SVPTTDPHQSSV.

This sequence belongs to the SNF7 family. In terms of assembly, probable peripherally associated component of the endosomal sorting required for transport complex III (ESCRT-III).

The protein resides in the endosome membrane. In terms of biological role, probable peripherally associated component of the endosomal sorting required for transport complex III (ESCRT-III) which is involved in multivesicular bodies (MVBs) formation and sorting of endosomal cargo proteins into MVBs. MVBs contain intraluminal vesicles (ILVs) that are generated by invagination and scission from the limiting membrane of the endosome and are delivered to lysosomes enabling degradation of membrane proteins. The sequence is that of Charged multivesicular body protein 5 (chmp5) from Dictyostelium discoideum (Social amoeba).